The following is a 390-amino-acid chain: Large ribosomal subunit protein mL44 (390 aa).

A mitochondrion-targeting transit peptide spans Met1–Gln59. One can recognise an RNase III domain in the interval Ala139–Ile205. The 71-residue stretch at Gln302–Cys372 folds into the DRBM domain.

This sequence belongs to the ribonuclease III family. Mitochondrion-specific ribosomal protein mL44 subfamily. In terms of assembly, component of the mitochondrial large ribosomal subunit (mt-LSU). Mature yeast 74S mitochondrial ribosomes consist of a small (37S) and a large (54S) subunit. The 37S small subunit contains a 15S ribosomal RNA (15S mt-rRNA) and 34 different proteins. The 54S large subunit contains a 21S rRNA (21S mt-rRNA) and 46 different proteins. mL44 forms a heterodimer with mL57 and stabilizes rRNA expansion segments 1/2 at a membrane-facing protuberance close to the point of attachment of the ribosome to the translocon in the membrane.

It is found in the mitochondrion. Functionally, component of the mitochondrial ribosome (mitoribosome), a dedicated translation machinery responsible for the synthesis of mitochondrial genome-encoded proteins, including at least some of the essential transmembrane subunits of the mitochondrial respiratory chain. The mitoribosomes are attached to the mitochondrial inner membrane and translation products are cotranslationally integrated into the membrane. The sequence is that of Large ribosomal subunit protein mL44 (MRPL3) from Saccharomyces cerevisiae (strain ATCC 204508 / S288c) (Baker's yeast).